The chain runs to 417 residues: NADH-quinone oxidoreductase subunit D (417 aa).

This sequence belongs to the complex I 49 kDa subunit family. As to quaternary structure, NDH-1 is composed of 14 different subunits. Subunits NuoB, C, D, E, F, and G constitute the peripheral sector of the complex.

The protein localises to the cell inner membrane. The enzyme catalyses a quinone + NADH + 5 H(+)(in) = a quinol + NAD(+) + 4 H(+)(out). NDH-1 shuttles electrons from NADH, via FMN and iron-sulfur (Fe-S) centers, to quinones in the respiratory chain. The immediate electron acceptor for the enzyme in this species is believed to be ubiquinone. Couples the redox reaction to proton translocation (for every two electrons transferred, four hydrogen ions are translocated across the cytoplasmic membrane), and thus conserves the redox energy in a proton gradient. In Burkholderia vietnamiensis (strain G4 / LMG 22486) (Burkholderia cepacia (strain R1808)), this protein is NADH-quinone oxidoreductase subunit D.